Here is a 658-residue protein sequence, read N- to C-terminus: A-type ATP synthase subunit I (658 aa).

Transmembrane regions (helical) follow at residues 383–403 (MAFVFPFFFGFCLTDAGYGII), 427–447 (IIMMSCGVWAFILGMVTNGFI), 475–495 (ILIMALTVGVLHINFGLILGA), 507–526 (ALGSQIVWLILELGIILYLV), 530–552 (IFGAPLIILAFAMLLYYNGLFGL), 568–588 (LLALCLSTGGIAMTVNILTGL), and 591–611 (EMIPVIGVVLAPIIFVFGHIA).

It belongs to the V-ATPase 116 kDa subunit family. In terms of assembly, has multiple subunits with at least A(3), B(3), C, D, E, F, H, I and proteolipid K(x).

Its subcellular location is the cell membrane. In terms of biological role, component of the A-type ATP synthase that produces ATP from ADP in the presence of a proton gradient across the membrane. The chain is A-type ATP synthase subunit I from Methanothermobacter thermautotrophicus (strain ATCC 29096 / DSM 1053 / JCM 10044 / NBRC 100330 / Delta H) (Methanobacterium thermoautotrophicum).